Here is a 45-residue protein sequence, read N- to C-terminus: Large ribosomal subunit protein bL34 (45 aa).

It belongs to the bacterial ribosomal protein bL34 family.

The sequence is that of Large ribosomal subunit protein bL34 from Corynebacterium urealyticum (strain ATCC 43042 / DSM 7109).